Here is an 85-residue protein sequence, read N- to C-terminus: Beta-mammal/insect toxin Lqhb1 (85 aa).

The N-terminal stretch at 1–19 is a signal peptide; that stretch reads MKIIIFLIVSSLMLIGVKT. The region spanning 20-82 is the LCN-type CS-alpha/beta domain; sequence DNGYLLNKAT…LWAYATNKCN (63 aa). Disulfide bonds link cysteine 31-cysteine 81, cysteine 35-cysteine 56, cysteine 42-cysteine 63, and cysteine 46-cysteine 65.

The protein belongs to the long (4 C-C) scorpion toxin superfamily. Sodium channel inhibitor family. As to expression, expressed by the venom gland.

The protein localises to the secreted. Beta toxins bind voltage-independently at site-4 of sodium channels (Nav) and shift the voltage of activation toward more negative potentials thereby affecting sodium channel activation and promoting spontaneous and repetitive firing. Competes, with apparent high affinity, with anti-insect and anti-mammalian beta-toxins for binding to cockroach and rat brain synaptosomes, respectively. Also competes with an anti-mammalian alpha-toxin on binding to rat brain sodium channels. Has a weak effect on cardiac sodium channels and a marked effect on rat brain and skeletal muscle sodium channels. The chain is Beta-mammal/insect toxin Lqhb1 from Leiurus hebraeus (Hebrew deathstalker scorpion).